A 918-amino-acid chain; its full sequence is Non-lysosomal glucosylceramidase (918 aa).

Residues 886 to 918 form a disordered region; sequence HKKSRRPSVTQGTGLSTQPECGPKRSLANLNSE. Over residues 892–904 the composition is skewed to polar residues; that stretch reads PSVTQGTGLSTQP. S893 carries the phosphoserine modification.

This sequence belongs to the non-lysosomal glucosylceramidase family. Widely expressed at low level. Highly expressed in testis and brain. Ubiquitously expressed in the brain (at protein level). Expressed by Sertoli cells (at protein level).

The protein localises to the endoplasmic reticulum membrane. The protein resides in the golgi apparatus membrane. The enzyme catalyses a beta-D-glucosyl-(1&lt;-&gt;1')-N-acylsphing-4-enine + H2O = an N-acylsphing-4-enine + D-glucose. It carries out the reaction a beta-D-galactosyl-(1&lt;-&gt;1')-N-acylsphing-4-enine + H2O = an N-acylsphing-4-enine + D-galactose. The catalysed reaction is beta-D-glucosyl-(1-&gt;3)-O-lithocholate + H2O = lithocholate + D-glucose. It catalyses the reaction beta-D-glucosyl-(1-&gt;3)-O-chenodeoxycholate + H2O = chenodeoxycholate + D-glucose. The enzyme catalyses a di-trans,poly-cis-dolichyl beta-D-glucosyl phosphate + chenodeoxycholate = beta-D-glucosyl-(1-&gt;3)-O-chenodeoxycholate + a di-trans,poly-cis-dolichyl phosphate + H(+). It carries out the reaction octyl beta-D-glucose + chenodeoxycholate = beta-D-glucosyl-(1-&gt;3)-O-chenodeoxycholate + octan-1-ol. The catalysed reaction is cholesteryl 3-beta-D-glucoside + H2O = cholesterol + D-glucose. It catalyses the reaction a beta-D-glucosyl-(1&lt;-&gt;1')-N-acylsphing-4-enine + cholesterol = cholesteryl 3-beta-D-glucoside + an N-acylsphing-4-enine. The enzyme catalyses beta-D-glucosyl-N-(9Z-octadecenoyl)-sphing-4E-enine + cholesterol = N-(9Z-octadecenoyl)-sphing-4-enine + cholesteryl 3-beta-D-glucoside. It carries out the reaction a beta-D-galactosyl-(1&lt;-&gt;1')-N-acylsphing-4-enine + cholesterol = cholesteryl 3-beta-D-galactoside + an N-acylsphing-4-enine. The catalysed reaction is 1-(beta-D-galactosyl)-N-dodecanoylsphing-4-enine + cholesterol = cholesteryl 3-beta-D-galactoside + N-dodecanoylsphing-4-enine. Its pathway is lipid metabolism; sphingolipid metabolism. It participates in steroid metabolism; cholesterol metabolism. Enzymatic activity is dependent on membrane association and requires the presence of lipids. Inhibited by N-(adamantanemethyloxypentyl)-deoxynojirimycin/AMP-DNM. Inhibited by its product sphingosine/N-acylsphing-4-enine in a feedback loop. Also inhibited by other non-acetylated sphingoid bases and their derivatives but not by sphingosine-1-phosphate and complex sphingolipids. Its function is as follows. Non-lysosomal glucosylceramidase that catalyzes the hydrolysis of glucosylceramides/GlcCers (such as beta-D-glucosyl-(1&lt;-&gt;1')-N-acylsphing-4-enine) to free glucose and ceramides (such as N-acylsphing-4-enine). GlcCers are membrane glycosphingolipids that have a wide intracellular distribution. They are the main precursors of more complex glycosphingolipids that play a role in cellular growth, differentiation, adhesion, signaling, cytoskeletal dynamics and membrane properties. Also involved in the transglucosylation of cholesterol, transferring glucose from GlcCer, thereby modifying its water solubility and biological properties. Under specific conditions, may catalyze the reverse reaction, transferring glucose from cholesteryl-3-beta-D-glucoside to ceramide (such as N-acylsphing-4-enine). May play a role in the metabolism of bile acids. Able to hydrolyze bile acid 3-O-glucosides as well as to produce bile acid-glucose conjugates thanks to a bile acid glucosyl transferase activity. Catalyzes the hydrolysis of galactosylceramides/GalCers (such as beta-D-galactosyl-(1&lt;-&gt;1')-N-acylsphing-4-enine), as well as galactosyl transfer between GalCers and cholesterol in vitro with lower activity compared with their activity against GlcCers. In Mus musculus (Mouse), this protein is Non-lysosomal glucosylceramidase.